A 153-amino-acid polypeptide reads, in one-letter code: Large ribosomal subunit protein uL30 (153 aa).

It belongs to the universal ribosomal protein uL30 family. Part of the 50S ribosomal subunit.

This chain is Large ribosomal subunit protein uL30, found in Methanoculleus marisnigri (strain ATCC 35101 / DSM 1498 / JR1).